The sequence spans 79 residues: Short neurotoxin 4 (79 aa).

A signal peptide spans 1–21 (MKTLLLTLVMVTIMCLDLGYT). Disulfide bonds link C24-C41, C34-C59, and C63-C71.

The protein belongs to the three-finger toxin family. Short-chain subfamily. Type III alpha-neurotoxin sub-subfamily. As to expression, expressed by the venom gland.

Its subcellular location is the secreted. In terms of biological role, binds with high affinity to muscle nicotinic acetylcholine receptor (nAChR) and hinders acetylcholine binding to the receptor, thereby impairing neuromuscular transmission. Causes muscle paralysis, spasms and increased respiration. The protein is Short neurotoxin 4 of Pseudonaja textilis (Eastern brown snake).